Here is a 2003-residue protein sequence, read N- to C-terminus: Histone acetyltransferase KAT6A (2003 aa).

An SAMD1-like winged helix (WH) domain is found at 1–77 (MVKLANPLYT…LNSYKDPDNP (77 aa)). The segment at 1-144 (MVKLANPLYT…CGGSAAPGFH (144 aa)) is required for activation of RUNX1-1. The required for nuclear localization stretch occupies residues 52–166 (ELSVKDGTIL…HGRLLKDGPL (115 aa)). In terms of domain architecture, H15 spans 95 to 171 (QSVDWNKLLK…KDGPLYRLNT (77 aa)). An interaction with PML region spans residues 144–663 (HQQLRLAIKR…RKGYGRFLID (520 aa)). N6-acetyllysine is present on Lys-172. PHD-type zinc fingers lie at residues 206–265 (IPIC…CKTC) and 262–313 (CKTC…CRPR). The interaction with RUNX1-1 stretch occupies residues 312–663 (PRKKGRKLLQ…RKGYGRFLID (352 aa)). The tract at residues 336–377 (GRPKNRLKKQNTVSKGPFSKVRTGPGRGRKRKITVSSQSASS) is disordered. N6-acetyllysine occurs at positions 350 and 355. A Phosphothreonine; by PKB/AKT1 modification is found at Thr-369. A Phosphoserine modification is found at Ser-419. The segment at 439–466 (RKKGNRKSSTSDWPTDNQDGWESKQENE) is disordered. Positions 445 to 458 (KSSTSDWPTDNQDG) are enriched in polar residues. At Ser-472 the chain carries Phosphoserine. The tract at residues 487 to 777 (IQEQALQKVG…VDPECLRWTP (291 aa)) is catalytic. The MYST-type HAT domain maps to 503 to 777 (PQVRCPSVIE…VDPECLRWTP (275 aa)). Residues 506–809 (RCPSVIEFGK…EPQGQERELE (304 aa)) are mediates interaction with BRPF1, required for histone H3 acetyltransferase activity. The C2HC MYST-type zinc finger occupies 536–561 (LYLCEFCLKYMKSRTILQQHMKKCGW). Position 603 is an N6-acetyllysine; by autocatalysis (Lys-603). Acetyl-CoA-binding positions include 644-648 (SCIMI) and 653-659 (QRKGYGR). Glu-679 serves as the catalytic Proton donor/acceptor. Ser-683 contributes to the acetyl-CoA binding site. The tract at residues 784-939 (VVSEDEDEEA…DGKPDIPKGR (156 aa)) is disordered. Residue Ser-786 is modified to Phosphoserine. The segment covering 786 to 798 (SEDEDEEADEGEK) has biased composition (acidic residues). The span at 799–841 (EEPQGQERELETRVKVGKSVSREKKDQESSSLIETDKKPEVKE) shows a compositional bias: basic and acidic residues. N6-acetyllysine occurs at positions 813 and 816. Lys-836 participates in a covalent cross-link: Glycyl lysine isopeptide (Lys-Gly) (interchain with G-Cter in SUMO2). Over residues 866–875 (RRGRCGRKNR) the composition is skewed to basic residues. Positions 876-890 (KTQERFGDKDSKMLV) are enriched in basic and acidic residues. The residue at position 901 (Tyr-901) is a Phosphotyrosine. Residues 904-917 (CEEKSETSQERFTE) show a composition bias toward basic and acidic residues. 2 positions are modified to phosphoserine: Ser-941 and Ser-954. The segment at 983-1083 (GFSESSEEEE…EEEESELFPR (101 aa)) is disordered. N6-acetyllysine is present on Lys-1007. A compositionally biased stretch (basic residues) spans 1009–1030 (TLKRKKPILHRRRRVRKRKHHN). Positions 1031–1042 (SSVVTETISETT) are enriched in low complexity. Acidic residues-rich tracts occupy residues 1043 to 1053 (EVLDEPFEDSD) and 1065 to 1079 (FEMEEEEEEEEEESE). Phosphoserine is present on residues Ser-1090, Ser-1091, and Ser-1115. Disordered stretches follow at residues 1096 to 1174 (RCQS…RKPG), 1197 to 1438 (IKPG…GAYQ), 1455 to 1533 (HTDE…PSVS), 1546 to 1568 (DLGSIESTTENYENPSSYDSTMG), and 1631 to 1707 (TCVV…CSMN). A compositionally biased stretch (acidic residues) spans 1107–1120 (EEEEEEEESDDADD). The segment covering 1136–1147 (NSASLEPDTSTP) has biased composition (polar residues). A compositionally biased stretch (basic residues) spans 1148–1174 (MKKKKGWPKGKSRKPIHWKKRPGRKPG). The segment covering 1204–1229 (RTQENEEIVEVKEDLLEERKEEMHTE) has biased composition (basic and acidic residues). Acidic residues-rich tracts occupy residues 1230-1241 (PDEEAEEEEDTT) and 1282-1299 (EEPQELEEQEQEEEDEVT). Positions 1317–1334 (HLDSLKTKEPEEQPARED) are enriched in basic and acidic residues. Lys-1336 is covalently cross-linked (Glycyl lysine isopeptide (Lys-Gly) (interchain with G-Cter in SUMO2)). Basic and acidic residues-rich tracts occupy residues 1352–1361 (DSRENTKDKD) and 1393–1414 (DSNTKEELIELKEEEEIPHSEL). Over residues 1473 to 1490 (HNSPISSIPSHPSQSVRS) the composition is skewed to low complexity. Polar residues-rich tracts occupy residues 1502–1523 (GYTQISPEQGSLSAPSMQNMET) and 1550–1568 (IESTTENYENPSSYDSTMG). An interaction with RUNX1-2 region spans residues 1511 to 1636 (GSLSAPSMQN…KSPQTCVVER (126 aa)). The segment at 1511-1740 (GSLSAPSMQN…YERIPGDFGA (230 aa)) is interaction with PML. Pro residues-rich tracts occupy residues 1640 to 1673 (NQQPPPPPPPPPPPQQPQPPPQQQAAPQPPPPQP) and 1682 to 1698 (QPPPPQQQPQPPPPQQQ). Positions 1912–1947 (SMNMNTLNAMNSYRMTQPMMNSSYHSNPAYMNQTAQ) are required for activation of RUNX1-2.

Belongs to the MYST (SAS/MOZ) family. As to quaternary structure, component of the MOZ/MORF complex composed at least of ING5, KAT6A, KAT6B, MEAF6 and one of BRPF1, BRD1/BRPF2 and BRPF3. Interacts with RUNX2. Interacts with RUNX1; phosphorylation of RUNX1 enhances the interaction. Interacts with p53/TP53. Interacts with PML and this interaction positively regulates its acetylation activity towards p53/TP53. Post-translationally, autoacetylated. Autoacetylation at Lys-603 is required for proper function. Phosphorylation at Thr-369 by PKB/AKT1 inhibits its interaction with PML and negatively regulates its acetylation activity towards p53/TP53.

The protein resides in the nucleus. Its subcellular location is the nucleolus. It localises to the nucleoplasm. It is found in the PML body. It carries out the reaction L-lysyl-[protein] + acetyl-CoA = N(6)-acetyl-L-lysyl-[protein] + CoA + H(+). In terms of biological role, histone acetyltransferase that acetylates lysine residues in histone H3 and histone H4 (in vitro). Component of the MOZ/MORF complex which has a histone H3 acetyltransferase activity. May act as a transcriptional coactivator for RUNX1 and RUNX2. Acetylates p53/TP53 at 'Lys-120' and 'Lys-382' and controls its transcriptional activity via association with PML. This chain is Histone acetyltransferase KAT6A (Kat6a), found in Mus musculus (Mouse).